Here is a 343-residue protein sequence, read N- to C-terminus: Anthranilate phosphoribosyltransferase (343 aa).

5-phospho-alpha-D-ribose 1-diphosphate contacts are provided by residues G84, 87–88, T92, 94–97, 112–120, and S124; these read GD, NIST, and KHGNRSVSS. G84 contributes to the anthranilate binding site. A Mg(2+)-binding site is contributed by S96. N115 lines the anthranilate pocket. An anthranilate-binding site is contributed by R170. Mg(2+) is bound by residues D229 and E230.

The protein belongs to the anthranilate phosphoribosyltransferase family. In terms of assembly, homodimer. It depends on Mg(2+) as a cofactor.

The enzyme catalyses N-(5-phospho-beta-D-ribosyl)anthranilate + diphosphate = 5-phospho-alpha-D-ribose 1-diphosphate + anthranilate. The protein operates within amino-acid biosynthesis; L-tryptophan biosynthesis; L-tryptophan from chorismate: step 2/5. Catalyzes the transfer of the phosphoribosyl group of 5-phosphorylribose-1-pyrophosphate (PRPP) to anthranilate to yield N-(5'-phosphoribosyl)-anthranilate (PRA). The protein is Anthranilate phosphoribosyltransferase of Stenotrophomonas maltophilia (strain K279a).